A 257-amino-acid chain; its full sequence is uncharacterized protein (257 aa).

This sequence to yeast YKR015c.

This is an uncharacterized protein from Saccharomyces cerevisiae (strain ATCC 204508 / S288c) (Baker's yeast).